Here is a 60-residue protein sequence, read N- to C-terminus: Single-pass membrane and coiled-coil domain-containing protein 4 homolog (60 aa).

Positions Met1 to Glu21 are disordered. Basic and acidic residues predominate over residues Gln8–Glu21. Residues Lys10–Ile33 are a coiled coil. A helical transmembrane segment spans residues Thr32–Lys52.

Belongs to the SMCO4 family.

The protein resides in the membrane. The chain is Single-pass membrane and coiled-coil domain-containing protein 4 homolog from Aedes aegypti (Yellowfever mosquito).